The chain runs to 316 residues: Sulfate adenylyltransferase subunit 2 (316 aa).

The tract at residues 297–316 (RAIDRDQSGSMEKKKREGYF) is disordered.

This sequence belongs to the PAPS reductase family. CysD subfamily. In terms of assembly, heterodimer composed of CysD, the smaller subunit, and CysN.

The enzyme catalyses sulfate + ATP + H(+) = adenosine 5'-phosphosulfate + diphosphate. Its pathway is sulfur metabolism; hydrogen sulfide biosynthesis; sulfite from sulfate: step 1/3. Its function is as follows. With CysN forms the ATP sulfurylase (ATPS) that catalyzes the adenylation of sulfate producing adenosine 5'-phosphosulfate (APS) and diphosphate, the first enzymatic step in sulfur assimilation pathway. APS synthesis involves the formation of a high-energy phosphoric-sulfuric acid anhydride bond driven by GTP hydrolysis by CysN coupled to ATP hydrolysis by CysD. The sequence is that of Sulfate adenylyltransferase subunit 2 from Allorhizobium ampelinum (strain ATCC BAA-846 / DSM 112012 / S4) (Agrobacterium vitis (strain S4)).